The sequence spans 441 residues: MSTEITFDQLESFSKKWRENPDKLVFQASIMKNGIKAATENPVSKATVQPVFSHEVHTDKVSNQQQSGRCWMFAALNTFRHKLNGTLGLKDFELSQNYTNFWDKLEKANYFLENIIETANEDEDSRLVSWLLDTPQQDGGQWDMLVSIIEKYGVVSKSAMPETFQSSKSADLNHLLNERLRTDAVILRKAVKEQKDTAGLKEEMLAEVYQLLVMTLGEPPKVFDFEYRNKDNEFKQDLQITPKEFYKRYVDMDLKDYIPLINAPTKDKPFNQAFTVDYLGNIVNGTPIKYLNVEMDVLKKATADQIKDGETVWFGCDVGQLSERTTGIMDTDIFLLNQAFGFKTAMTKAERLDYKHSMLTHAMVLTGVNIVNNEVNRWKVENSWGEKIGNNGYFVASDAWMDEFTFQVVVHKKYLSKELIEAFSNEPIALKPWDPMGSLAL.

Catalysis depends on residues C70, H361, and N382.

The protein belongs to the peptidase C1 family.

The enzyme catalyses Inactivates bleomycin B2 (a cytotoxic glycometallopeptide) by hydrolysis of a carboxyamide bond of beta-aminoalanine, but also shows general aminopeptidase activity. The specificity varies somewhat with source, but amino acid arylamides of Met, Leu and Ala are preferred.. The polypeptide is Aminopeptidase C (pepC) (Listeria innocua serovar 6a (strain ATCC BAA-680 / CLIP 11262)).